The primary structure comprises 724 residues: N-alpha-acetyltransferase 35, NatC auxiliary subunit (724 aa).

Belongs to the MAK10 family. In terms of assembly, component of the N-terminal acetyltransferase C (NatC) complex.

It localises to the cytoplasm. Functionally, auxillary component of the N-terminal acetyltransferase C (NatC) complex which catalyzes acetylation of N-terminal methionine residues. N-terminal acetylation protects proteins from ubiquitination and degradation by the N-end rule pathway. Regulates cell proliferation during embryonic development. The sequence is that of N-alpha-acetyltransferase 35, NatC auxiliary subunit (naa35) from Danio rerio (Zebrafish).